The primary structure comprises 376 residues: WD repeat-containing protein 86 (376 aa).

WD repeat units lie at residues 13–52 (DHRG…CCAL), 55–94 (GHES…QVYR), 95–132 (GHTS…MSRE), 135–188 (GHRN…CHQT), 191–232 (GHTG…RVFR), 234–272 (HRGS…RTFT), 274–310 (HRRN…LRRV), and 313–350 (GHTF…GAPR).

The polypeptide is WD repeat-containing protein 86 (WDR86) (Homo sapiens (Human)).